A 152-amino-acid chain; its full sequence is Ribosome maturation factor RimP (152 aa).

The protein belongs to the RimP family.

It is found in the cytoplasm. In terms of biological role, required for maturation of 30S ribosomal subunits. The sequence is that of Ribosome maturation factor RimP from Teredinibacter turnerae (strain ATCC 39867 / T7901).